Reading from the N-terminus, the 154-residue chain is Hydroperoxy fatty acid reductase Gpx2 (154 aa).

Residue Cys-34 is part of the active site.

This sequence belongs to the glutathione peroxidase family. Monomer.

The enzyme catalyses a hydroperoxy polyunsaturated fatty acid + NADPH + H(+) = a hydroxy polyunsaturated fatty acid + NADP(+) + H2O. Mercaptosuccinate, pCMB, and nethylmaleimide act as inhibitors of the catalytic activity. Hydroperoxy fatty acid reductase essential for the removal of lipid hydroperoxides under normal and stress conditions, leading to the protection of membrane integrity. This Synechocystis sp. (strain ATCC 27184 / PCC 6803 / Kazusa) protein is Hydroperoxy fatty acid reductase Gpx2 (gpx2).